Here is a 902-residue protein sequence, read N- to C-terminus: DNA mismatch repair protein MutS (902 aa).

647–654 (GPNMGGKS) is a binding site for ATP.

This sequence belongs to the DNA mismatch repair MutS family.

This protein is involved in the repair of mismatches in DNA. It is possible that it carries out the mismatch recognition step. This protein has a weak ATPase activity. This chain is DNA mismatch repair protein MutS, found in Nitrosospira multiformis (strain ATCC 25196 / NCIMB 11849 / C 71).